A 313-amino-acid chain; its full sequence is MSQEFAHLSVLLAETVGGLNIKDDGIYIDGTFGRGGHSRQVLQQLGENGRLIAIDRDPQAIEAAKQFADDPRFQIVHGGFGQLADYVEELGLVGKIDGVLLDLGVSSPQLDDAERGFSFMRDGPLDMRMDNSQGQTAAQWLARAEIEDMAWVFKTYGEEKNARHIARCIAADRDKTPFLRTKDLADLIARITKSKERNKHPATRVFQAIRIYINSELDQIDQALEGAVNVLAPQGRLSVISFHSLEDRIVKRFIRRHSQGESVPHGFPVTEDQINKSRKLRAVGKAIMPSDEEIERNARARSSVLRIAERLDY.

S-adenosyl-L-methionine-binding positions include 35 to 37 (GGH), Asp-55, Phe-80, Asp-102, and Gln-109.

It belongs to the methyltransferase superfamily. RsmH family.

It localises to the cytoplasm. It catalyses the reaction cytidine(1402) in 16S rRNA + S-adenosyl-L-methionine = N(4)-methylcytidine(1402) in 16S rRNA + S-adenosyl-L-homocysteine + H(+). In terms of biological role, specifically methylates the N4 position of cytidine in position 1402 (C1402) of 16S rRNA. This chain is Ribosomal RNA small subunit methyltransferase H, found in Shewanella baltica (strain OS223).